Here is a 596-residue protein sequence, read N- to C-terminus: Phosphomethylpyrimidine synthase 1 (596 aa).

Substrate-binding positions include asparagine 228, methionine 257, tyrosine 286, histidine 322, serine 342–glycine 344, aspartate 383–arginine 386, and glutamate 422. Residue histidine 426 coordinates Zn(2+). A substrate-binding site is contributed by tyrosine 449. Zn(2+) is bound at residue histidine 490. [4Fe-4S] cluster-binding residues include cysteine 570, cysteine 573, and cysteine 578.

This sequence belongs to the ThiC family. Homodimer. [4Fe-4S] cluster is required as a cofactor.

It carries out the reaction 5-amino-1-(5-phospho-beta-D-ribosyl)imidazole + S-adenosyl-L-methionine = 4-amino-2-methyl-5-(phosphooxymethyl)pyrimidine + CO + 5'-deoxyadenosine + formate + L-methionine + 3 H(+). The protein operates within cofactor biosynthesis; thiamine diphosphate biosynthesis. Catalyzes the synthesis of the hydroxymethylpyrimidine phosphate (HMP-P) moiety of thiamine from aminoimidazole ribotide (AIR) in a radical S-adenosyl-L-methionine (SAM)-dependent reaction. This Syntrophotalea carbinolica (strain DSM 2380 / NBRC 103641 / GraBd1) (Pelobacter carbinolicus) protein is Phosphomethylpyrimidine synthase 1.